Here is a 392-residue protein sequence, read N- to C-terminus: Phosphopentomutase (392 aa).

Mn(2+) contacts are provided by Asp13, Asp286, His291, Asp327, His328, and His339.

Belongs to the phosphopentomutase family. Mn(2+) is required as a cofactor.

It localises to the cytoplasm. The catalysed reaction is 2-deoxy-alpha-D-ribose 1-phosphate = 2-deoxy-D-ribose 5-phosphate. It catalyses the reaction alpha-D-ribose 1-phosphate = D-ribose 5-phosphate. It functions in the pathway carbohydrate degradation; 2-deoxy-D-ribose 1-phosphate degradation; D-glyceraldehyde 3-phosphate and acetaldehyde from 2-deoxy-alpha-D-ribose 1-phosphate: step 1/2. Isomerase that catalyzes the conversion of deoxy-ribose 1-phosphate (dRib-1-P) and ribose 1-phosphate (Rib-1-P) to deoxy-ribose 5-phosphate (dRib-5-P) and ribose 5-phosphate (Rib-5-P), respectively. In Oceanobacillus iheyensis (strain DSM 14371 / CIP 107618 / JCM 11309 / KCTC 3954 / HTE831), this protein is Phosphopentomutase.